The following is a 1163-amino-acid chain: DNA-directed RNA polymerase subunit beta 2 (1163 aa).

This sequence belongs to the RNA polymerase beta chain family. The RNAP catalytic core consists of 2 alpha, 1 beta, 1 beta' and 1 omega subunit. When a sigma factor is associated with the core the holoenzyme is formed, which can initiate transcription.

It catalyses the reaction RNA(n) + a ribonucleoside 5'-triphosphate = RNA(n+1) + diphosphate. Its function is as follows. DNA-dependent RNA polymerase catalyzes the transcription of DNA into RNA using the four ribonucleoside triphosphates as substrates. The sequence is that of DNA-directed RNA polymerase subunit beta 2 from Nocardia farcinica (strain IFM 10152).